We begin with the raw amino-acid sequence, 119 residues long: Ribonuclease P protein component (119 aa).

This sequence belongs to the RnpA family. As to quaternary structure, consists of a catalytic RNA component (M1 or rnpB) and a protein subunit.

The catalysed reaction is Endonucleolytic cleavage of RNA, removing 5'-extranucleotides from tRNA precursor.. Its function is as follows. RNaseP catalyzes the removal of the 5'-leader sequence from pre-tRNA to produce the mature 5'-terminus. It can also cleave other RNA substrates such as 4.5S RNA. The protein component plays an auxiliary but essential role in vivo by binding to the 5'-leader sequence and broadening the substrate specificity of the ribozyme. This chain is Ribonuclease P protein component, found in Streptococcus gordonii (strain Challis / ATCC 35105 / BCRC 15272 / CH1 / DL1 / V288).